The following is a 446-amino-acid chain: MTEQKRKIEKLAGVKGMNDILPQDAGLWEFFEATVKSLLRAYGYQNIRTPIVEHTQLFTRGIGEVTDIVEKEMYSFTDALNGENLTMRPENTAAVVRAAIEHNMLYDGPKRLWYIGPMFRHERPQRGRYRQFHQVGVEALGFAGPDADAEIIMMCQRLWDDLGLTGIKLEINSLGLAEERAAHRVELIKYLEQHVDVLDEDAKRRLYTNPLRVLDTKNPALQEIAQNAPKLIDFLGDESRAHFEGLQRLLLANNIPFKINPRLVRGLDYYNLTVFEWVTDKLGAQGTVAAGGRYDPLIEQLGGKPTAACGWAMGIERILELLKEEDLAPEQEGVDVYVVHQGEAAREQAFIAAERLRDTGLDVIFHCSADGAPASFKSQMKRADASGAAFAVIFGEEEVANGTAGVKALRGAGQEGEKNVQQTVPVEGLTEFLINAMVASAEDGDD.

It belongs to the class-II aminoacyl-tRNA synthetase family. As to quaternary structure, homodimer.

The protein resides in the cytoplasm. The enzyme catalyses tRNA(His) + L-histidine + ATP = L-histidyl-tRNA(His) + AMP + diphosphate + H(+). This Burkholderia vietnamiensis (strain G4 / LMG 22486) (Burkholderia cepacia (strain R1808)) protein is Histidine--tRNA ligase.